The primary structure comprises 849 residues: G-type lectin S-receptor-like serine/threonine-protein kinase At4g11900 (849 aa).

The first 26 residues, 1 to 26 (MQICKKNVFLLYYGVLVFLSFQVSSS), serve as a signal peptide directing secretion. Residues 27-180 (TDTISTNQPL…PNSSAAVLWQ (154 aa)) enclose the Bulb-type lectin domain. Topologically, residues 27–466 (TDTISTNQPL…RKTEHSKGKS (440 aa)) are extracellular. Residues Asn-111, Asn-148, Asn-172, and Asn-232 are each glycosylated (N-linked (GlcNAc...) asparagine). Residues 311–348 (PDNRCDVYNSCGSFGICNENREPPPCRCVPGFKREFSQ) enclose the EGF-like domain. 4 disulfides stabilise this stretch: Cys-315–Cys-327, Cys-321–Cys-336, Cys-401–Cys-421, and Cys-405–Cys-411. The region spanning 368–447 (CYKRNDEFLP…KGHTFFLRLA (80 aa)) is the PAN domain. A glycan (N-linked (GlcNAc...) asparagine) is linked at Asn-450. The chain crosses the membrane as a helical span at residues 467 to 487 (IVLPLVLASLVATAACFVGLY). Residues 488-849 (CCISSRIRRK…EATQTELEAR (362 aa)) are Cytoplasmic-facing. A Protein kinase domain is found at 537–822 (FSRKKKLGEG…TLPIPKQPTF (286 aa)). ATP is bound by residues 543-551 (LGEGGFGPV) and Lys-565. The residue at position 571 (Ser-571) is a Phosphoserine. The tract at residues 626–643 (LKSRELDWETRMKIVNGT) is caM-binding. The active-site Proton acceptor is Asp-662. Phosphoserine is present on residues Ser-666 and Ser-679. Thr-696 carries the phosphothreonine modification. The residue at position 837 (Ser-837) is a Phosphoserine. Residue Thr-844 is modified to Phosphothreonine.

Belongs to the protein kinase superfamily. Ser/Thr protein kinase family.

The protein resides in the cell membrane. It carries out the reaction L-seryl-[protein] + ATP = O-phospho-L-seryl-[protein] + ADP + H(+). The enzyme catalyses L-threonyl-[protein] + ATP = O-phospho-L-threonyl-[protein] + ADP + H(+). This chain is G-type lectin S-receptor-like serine/threonine-protein kinase At4g11900, found in Arabidopsis thaliana (Mouse-ear cress).